Consider the following 348-residue polypeptide: Histidinol-phosphate aminotransferase (348 aa).

An N6-(pyridoxal phosphate)lysine modification is found at Lys-211.

This sequence belongs to the class-II pyridoxal-phosphate-dependent aminotransferase family. Histidinol-phosphate aminotransferase subfamily. In terms of assembly, homodimer. Pyridoxal 5'-phosphate is required as a cofactor.

It carries out the reaction L-histidinol phosphate + 2-oxoglutarate = 3-(imidazol-4-yl)-2-oxopropyl phosphate + L-glutamate. It functions in the pathway amino-acid biosynthesis; L-histidine biosynthesis; L-histidine from 5-phospho-alpha-D-ribose 1-diphosphate: step 7/9. In Chlorobaculum tepidum (strain ATCC 49652 / DSM 12025 / NBRC 103806 / TLS) (Chlorobium tepidum), this protein is Histidinol-phosphate aminotransferase.